Here is a 361-residue protein sequence, read N- to C-terminus: MKPSLIEKLKTLTYRYSEIGGLLSDSTVINDQDRYRELGKEYAQLEPIVKCFQQFQQNEKAIESAEEMQQEKDPELRKLAEEELEQLTLKKEELEDQLKLLLVPKDPNDELNVFLEIRAGTGGNEAAIFAGDLFRMYARYAETKGWRVNIVSAHEGEHGGFKEVIARVIGEGVYSQLKFESGAHRVQRVPVTESQGRIHTSACTVAIMPEVDEIDQIKINPAELRIDTFRASGAGGQHVNRTDSAIRITHLPTGVVVECQDERSQHKNKARAMSLLQSKLLAAERAKQDQEQAAKRKSLVGSGDRSERIRTYNFPQGRVTDHRINLTLYQLDEVIEGDLDPVIGPLIRELQAEQLAELSGE.

At Gln-237 the chain carries N5-methylglutamine. A disordered region spans residues 286 to 306; it reads AKQDQEQAAKRKSLVGSGDRS.

The protein belongs to the prokaryotic/mitochondrial release factor family. Post-translationally, methylated by PrmC. Methylation increases the termination efficiency of RF1.

Its subcellular location is the cytoplasm. Peptide chain release factor 1 directs the termination of translation in response to the peptide chain termination codons UAG and UAA. The protein is Peptide chain release factor 1 of Coxiella burnetii (strain CbuG_Q212) (Coxiella burnetii (strain Q212)).